Reading from the N-terminus, the 468-residue chain is BTB and MATH domain-containing protein 45 (468 aa).

An MATH domain is found at 7-124 (VFELSHVFKD…DDSIIIEVLV (118 aa)). BTB domains are found at residues 148–215 (SDGI…IDDD) and 304–368 (SDVI…IDDL).

The protein is BTB and MATH domain-containing protein 45 (bath-45) of Caenorhabditis elegans.